The primary structure comprises 409 residues: SPI-1 type 3 secretion system translocon protein SctB (409 aa).

Residues 119–140 traverse the membrane as a helical segment; it reads ISGMSSSAVALLAAANTLMLTL. Positions 350-368 are enriched in polar residues; it reads ERSEQQISQVNNRVASTAS. A disordered region spans residues 350 to 378; sequence ERSEQQISQVNNRVASTASDEARESSRKS.

This sequence belongs to the SctB/SipC family. The core secretion machinery of the T3SS is composed of approximately 20 different proteins, including cytoplasmic components, a base, an export apparatus and a needle. This subunit is involved in the formation of a pore, called the translocon, in host membrane.

The protein localises to the secreted. Its subcellular location is the host membrane. Its function is as follows. Component of the type III secretion system 1 (SPI-1 T3SS), also called injectisome, which is used to inject bacterial effector proteins into eukaryotic host cells. SipB/SctE1 and SipC/SctB1 are inserted into the host membrane where they form a pore and allow the translocation of effector proteins into the cytosol of target cells. The polypeptide is SPI-1 type 3 secretion system translocon protein SctB (Salmonella typhi).